We begin with the raw amino-acid sequence, 291 residues long: Undecaprenyl-diphosphatase 2 (291 aa).

A run of 6 helical transmembrane segments spans residues 39-59 (PGAA…LIYF), 85-105 (ARMG…GLTL), 118-138 (ITAT…RMAA), 198-218 (AARY…VFEL), 231-251 (PTLF…AWFM), and 262-282 (FVWY…VGVL).

The protein belongs to the UppP family.

It is found in the cell membrane. It carries out the reaction di-trans,octa-cis-undecaprenyl diphosphate + H2O = di-trans,octa-cis-undecaprenyl phosphate + phosphate + H(+). In terms of biological role, catalyzes the dephosphorylation of undecaprenyl diphosphate (UPP). Confers resistance to bacitracin. This is Undecaprenyl-diphosphatase 2 from Streptomyces coelicolor (strain ATCC BAA-471 / A3(2) / M145).